The following is a 130-amino-acid chain: Large ribosomal subunit protein bL17 (130 aa).

The protein belongs to the bacterial ribosomal protein bL17 family. In terms of assembly, part of the 50S ribosomal subunit. Contacts protein L32.

This chain is Large ribosomal subunit protein bL17, found in Azotobacter vinelandii (strain DJ / ATCC BAA-1303).